Reading from the N-terminus, the 105-residue chain is Urease subunit beta (105 aa).

Belongs to the urease beta subunit family. Heterotrimer of UreA (gamma), UreB (beta) and UreC (alpha) subunits. Three heterotrimers associate to form the active enzyme.

It localises to the cytoplasm. The enzyme catalyses urea + 2 H2O + H(+) = hydrogencarbonate + 2 NH4(+). The protein operates within nitrogen metabolism; urea degradation; CO(2) and NH(3) from urea (urease route): step 1/1. This Marinomonas sp. (strain MWYL1) protein is Urease subunit beta.